The primary structure comprises 826 residues: DNA mismatch repair protein MutS (826 aa).

ATP is bound at residue G622–S629.

The protein belongs to the DNA mismatch repair MutS family.

Functionally, this protein is involved in the repair of mismatches in DNA. It is possible that it carries out the mismatch recognition step. This protein has a weak ATPase activity. The protein is DNA mismatch repair protein MutS of Chlamydia abortus (strain DSM 27085 / S26/3) (Chlamydophila abortus).